Here is a 453-residue protein sequence, read N- to C-terminus: GTPase Der (453 aa).

EngA-type G domains lie at 4-169 (PVVA…PPTD) and 178-353 (INVA…EQHR). Residues 10 to 17 (GRPNVGKS), 57 to 61 (DTGGL), 120 to 123 (NKCE), 184 to 191 (GRPNVGKS), 231 to 235 (DTAGI), and 296 to 299 (NKWD) contribute to the GTP site. Residues 354 to 439 (RRVSTSVINE…PIRLLWRGKK (86 aa)) form the KH-like domain.

It belongs to the TRAFAC class TrmE-Era-EngA-EngB-Septin-like GTPase superfamily. EngA (Der) GTPase family. Associates with the 50S ribosomal subunit.

Functionally, GTPase that plays an essential role in the late steps of ribosome biogenesis. The polypeptide is GTPase Der (Cyanothece sp. (strain PCC 7425 / ATCC 29141)).